Reading from the N-terminus, the 696-residue chain is Solute carrier family 53 member 1 (696 aa).

At 1-228 the chain is on the cytoplasmic side; it reads MKFAEHLSAH…RVPPLGAAQP (228 aa). The 223-residue stretch at 2–224 folds into the SPX domain; the sequence is KFAEHLSAHI…MKRLRVPPLG (223 aa). The interval 158–165 is important for inositol polyphosphate binding; that stretch reads KILKKHDK. A helical transmembrane segment spans residues 229 to 259; it reads APAWTTFRVGLFCGIFIVLNITLVLAAVFKL. The Extracellular portion of the chain corresponds to 260–264; sequence ETDRS. The helical transmembrane segment at 265–296 threads the bilayer; the sequence is IWPLIRIYRGGFLLIEFLFLLGINTYGWRQAG. At 297-309 the chain is on the cytoplasmic side; it reads VNHVLIFELNPRS. The helical transmembrane segment at 310-337 threads the bilayer; that stretch reads NLSHQHLFEIAGFLGILWCLSLLACFFA. Topologically, residues 338–343 are extracellular; that stretch reads PISVIP. Residues 344–365 traverse the membrane as a helical segment; sequence TYVYPLALYGFMVFFLINPTKT. An intramembrane region (helical) is located at residues 366–383; it reads FYYKSRFWLLKLLFRVFT. The Cytoplasmic portion of the chain corresponds to 384-388; it reads APFHK. Residues 389 to 422 form a discontinuously helical membrane-spanning segment; the sequence is VGFADFWLADQLNSLSVILMDLEYMICFYSLELK. Phosphate is bound by residues Asp398 and Asn401. The Extracellular segment spans residues 423-429; it reads WDESKGL. The discontinuously helical transmembrane segment at 430–471 threads the bilayer; that stretch reads LPNNSEESGICHKYTYGVRAIVQCIPAWLRFIQCLRRYRDTK. One can recognise an EXS domain in the interval 439–643; it reads ICHKYTYGVR…LNADDQTLLE (205 aa). A topological domain (cytoplasmic) is located at residue Arg472. A helical transmembrane segment spans residues 473–503; sequence AFPHLVNAGKYSTTFFMVTFAALYSTHKERG. Residues Lys482 and Tyr483 each coordinate phosphate. Residues 504 to 506 are Extracellular-facing; it reads HSD. A helical membrane pass occupies residues 507–534; sequence TMVFFYLWIVFYIISSCYTLIWDLKMDW. At 535–553 the chain is on the cytoplasmic side; that stretch reads GLFDKNAGENTFLREEIVY. A discontinuously helical transmembrane segment spans residues 554–585; that stretch reads PQKAYYYCAIIEDVILRFAWTIQISITSTTLL. A phosphate-binding site is contributed by Arg570. Topologically, residues 586-587 are extracellular; the sequence is PH. Residues 588-626 traverse the membrane as a helical segment; that stretch reads SGDIIATVFAPLEVFRRFVWNFFRLENEHLNNCGEFRAV. Phosphate-binding residues include Arg603 and Arg604. Over 627–696 the chain is Cytoplasmic; it reads RDISVAPLNA…IEDTDDEANT (70 aa). Ser668 is subject to Phosphoserine. Positions 673–696 are disordered; it reads RLASQSKARDTKVLIEDTDDEANT. Thr690 is subject to Phosphothreonine.

It belongs to the SYG1 (TC 2.A.94) family. Homodimer. Widely expressed. Detected in spleen, lymph node, thymus, leukocytes, bone marrow, heart, kidney, pancreas and skeletal muscle.

Its subcellular location is the cell membrane. The catalysed reaction is phosphate(in) = phosphate(out). Its activity is regulated as follows. Allosterically activated by inositol hexakisphosphate (Ins6P). Inorganic ion transporter that mediates phosphate ion export across plasma membrane. Plays a major role in phosphate homeostasis, preventing intracellular phosphate accumulation and possible calcium phosphate precipitation, ultimately preserving calcium signaling. Binds inositol hexakisphosphate (Ins6P) and similar inositol polyphosphates, such as 5-diphospho-inositol pentakisphosphate (5-InsP7), which are important intracellular signaling molecules involved in regulation of phosphate flux. This is Solute carrier family 53 member 1 from Homo sapiens (Human).